Consider the following 542-residue polypeptide: 1,3-beta-glucanosyltransferase gas1 (542 aa).

Positions 1–19 (MKFSILSLAVAGLVGLAKA) are cleaved as a signal peptide. Residue Asn35 is glycosylated (N-linked (GlcNAc...) asparagine). Cys70 and Cys99 are joined by a disulfide. Tyr88 contributes to the (1,3-beta-D-glucosyl)n binding site. Asn91 is a glycosylation site (N-linked (GlcNAc...) asparagine). Residues Asn156 and Glu157 each contribute to the (1,3-beta-D-glucosyl)n site. Glu157 (proton donor) is an active-site residue. Asn161 carries an N-linked (GlcNAc...) asparagine glycan. Positions 198 and 203 each coordinate (1,3-beta-D-glucosyl)n. 5 disulfides stabilise this stretch: Cys212–Cys345, Cys230–Cys261, Cys367–Cys419, Cys376–Cys439, and Cys395–Cys400. A glycan (N-linked (GlcNAc...) asparagine) is linked at Asn249. Glu258 functions as the Nucleophile in the catalytic mechanism. An N-linked (GlcNAc...) asparagine glycan is attached at Asn279. Tyr290 contributes to the (1,3-beta-D-glucosyl)n binding site. N-linked (GlcNAc...) asparagine glycans are attached at residues Asn406, Asn484, Asn502, and Asn509. The segment at 490-515 (MSTSYTSGSGSSNSSGSSSNSSSKSS) is disordered. Ser516 carries the GPI-anchor amidated serine lipid modification. Positions 517-542 (GASSYNLNMVITFLSVVIGGTAVLFI) are cleaved as a propeptide — removed in mature form.

Belongs to the glycosyl hydrolase 72 family. The GPI-anchor is attached to the protein in the endoplasmic reticulum and serves to target the protein to the cell surface. There, the glucosamine-inositol phospholipid moiety is cleaved off and the GPI-modified mannoprotein is covalently attached via its lipidless GPI glycan remnant to the 1,6-beta-glucan of the outer cell wall layer.

It localises to the secreted. Its subcellular location is the cell wall. The protein resides in the membrane. Functionally, splits internally a 1,3-beta-glucan molecule and transfers the newly generated reducing end (the donor) to the non-reducing end of another 1,3-beta-glucan molecule (the acceptor) forming a 1,3-beta linkage, resulting in the elongation of 1,3-beta-glucan chains in the cell wall. In Schizosaccharomyces pombe (strain 972 / ATCC 24843) (Fission yeast), this protein is 1,3-beta-glucanosyltransferase gas1 (gas1).